Here is a 397-residue protein sequence, read N- to C-terminus: Lysophospholipid transporter LplT (397 aa).

The Periplasmic segment spans residues 1-17 (MSESVHTNTSLWSKGMK). A helical transmembrane segment spans residues 18–38 (AVIVAQFLSAFGDNALLFATL). At 39–52 (ALLKAQFYPEWSQP) the chain is on the cytoplasmic side. A helical transmembrane segment spans residues 53-73 (ILQMVFVGAYILFAPFVGQVA). The Periplasmic segment spans residues 74-90 (DSFAKGRVMMFANGLKL). A helical transmembrane segment spans residues 91–111 (LGAASICFGINPFLGYTLVGV). At 112–144 (GAAAYSPAKYGILGELTTGSKLVKANGLMEAST) the chain is on the cytoplasmic side. A helical transmembrane segment spans residues 145-165 (IAAILLGSVAGGVLADWHVLV). Ala-166 is a topological domain (periplasmic). Residues 167–187 (LAACALAYGGAVVANIYIPKL) traverse the membrane as a helical segment. Residues 188–226 (AAARPGQSWNLINMTRSFLNACTSLWRNGETRFSLVGTS) lie on the Cytoplasmic side of the membrane. Residues 227–247 (LFWGAGVTLRFLLVLWVPVAL) traverse the membrane as a helical segment. The Periplasmic portion of the chain corresponds to 248–256 (GITDNATPT). Residues 257–277 (YLNAMVAIGIVVGAGAAAKLV) traverse the membrane as a helical segment. At 278 to 280 (TLE) the chain is on the cytoplasmic side. A helical membrane pass occupies residues 281-301 (TVSRCMPAGILIGVVVLIFSL). Residues 302–304 (QHE) lie on the Periplasmic side of the membrane. Residues 305-325 (LLPAYALLMLIGVLGGFFVVP) form a helical membrane-spanning segment. Over 326 to 343 (LNALLQERGKKSVGAGNA) the chain is Cytoplasmic. Residues 344–364 (IAVQNLGENSAMLLMLGIYSL) form a helical membrane-spanning segment. The Periplasmic segment spans residues 365 to 366 (AV). The chain crosses the membrane as a helical span at residues 367 to 387 (MVGIPVVPIGIGFGTLFALAI). Residues 388–397 (TALWIWQRRH) are Cytoplasmic-facing.

Belongs to the major facilitator superfamily. LplT (TC 2.A.1.42) family.

It localises to the cell inner membrane. Functionally, catalyzes the facilitated diffusion of 2-acyl-glycero-3-phosphoethanolamine (2-acyl-GPE) into the cell. The chain is Lysophospholipid transporter LplT from Escherichia coli O9:H4 (strain HS).